The primary structure comprises 624 residues: Galactan 5-O-arabinofuranosyltransferase (624 aa).

The next 13 membrane-spanning stretches (helical) occupy residues 5–25, 43–63, 73–93, 127–147, 159–179, 181–201, 203–223, 234–254, 280–300, 326–346, 355–375, 391–411, and 422–442; these read VLGQ…VAIA, ALTT…GLLW, LGAL…PLGA, IGLP…IAAA, WSIV…AAMI, FEYA…YAST, PYAA…WAGL, AIVG…LLLV, LAVI…PYLL, FPMF…VWLV, AGAL…SMLT, LTVL…LAIA, and VVAA…QDIP.

The protein belongs to the glycosyltransferase 85 family.

The protein localises to the cell membrane. It carries out the reaction Adds an alpha-D-arabinofuranosyl group from trans,octacis-decaprenylphospho-beta-D-arabinofuranose at the 5-O-position of the eighth, tenth and twelfth galactofuranose unit of the galactofuranan chain of [beta-D-galactofuranosyl-(1-&gt;5)-beta-D-galactofuranosyl-(1-&gt;6)]14-beta-D-galactofuranosyl-(1-&gt;5)-beta-D-galactofuranosyl-(1-&gt;4)-alpha-L-rhamnopyranosyl-(1-&gt;3)-N-acetyl-alpha-D-glucosaminyl-diphospho-trans,octacis-decaprenol.. It functions in the pathway cell wall biogenesis; cell wall polysaccharide biosynthesis. Involved in the biosynthesis of the arabinogalactan (AG) region of the mycolylarabinogalactan-peptidoglycan (mAGP) complex, an essential component of the mycobacterial cell wall. Catalyzes the addition of the first key arabinofuranosyl (Araf) residue from the sugar donor decaprenyl-phospho-arabinose (DPA) on the C-5 of a 6-linked galactofuranosyl (Galf) of the galactan domain, thus 'priming' the galactan for further elaboration by other arabinofuranosyltransferases. It is not able to add an Araf residue to a terminal Galf. The polypeptide is Galactan 5-O-arabinofuranosyltransferase (Mycolicibacterium smegmatis (strain ATCC 700084 / mc(2)155) (Mycobacterium smegmatis)).